Reading from the N-terminus, the 298-residue chain is MGTEARAGRRQLLVFTSVVLSSLALGRGAVYTSEPDVRVPEDKPAKLSCSYSGFSNPRVEWKFAHGDITSLVCYKNKITASYADRVTFSHSGITFHSVTRKDTGTYTCMVSDDGGNTYGEVSVQLTVLVPPSKPTVHIPSSATIGSRAVLTCSEKDGSPPSEYYWFKDGVRMPLEPKGNRAFSNSSYSLNEKTGELVFDPVSAWDTGEYTCEAQNGYGMPMRSEAVRMEAAELNVGGIVAAVLVTLILLGFLILGIWFAYRRGYFDRTKKGTSSKKVIYSQPAARSEGEFRQTSSFLV.

A signal peptide spans Met-1–Gly-28. Ig-like V-type domains lie at Ala-29–Thr-126 and Pro-134–Arg-227. Over Ala-29–Gly-237 the chain is Extracellular. 2 cysteine pairs are disulfide-bonded: Cys-49–Cys-108 and Cys-152–Cys-211. Asn-184 carries N-linked (GlcNAc...) asparagine glycosylation. The helical transmembrane segment at Ile-238–Phe-258 threads the bilayer. The Cytoplasmic portion of the chain corresponds to Ala-259 to Val-298. 2 positions are modified to phosphoserine: Ser-280 and Ser-286.

The protein belongs to the immunoglobulin superfamily. As to quaternary structure, interacts with the ninth PDZ domain of MPDZ. Interacts with the first PDZ domain of PARD3. The association between PARD3 and PARD6B probably disrupts this interaction. Interacts with ITGAL (via I-domain). Interacts with CD151. In terms of assembly, (Microbial infection) Interacts with calicivirus capsid protein. (Microbial infection) Interacts with the orthoreovirus sigma-1 capsid protein.

The protein localises to the cell junction. The protein resides in the tight junction. It is found in the cell membrane. Functionally, seems to play a role in epithelial tight junction formation. Appears early in primordial forms of cell junctions and recruits PARD3. The association of the PARD6-PARD3 complex may prevent the interaction of PARD3 with JAM1, thereby preventing tight junction assembly. Plays a role in regulating monocyte transmigration involved in integrity of epithelial barrier. Ligand for integrin alpha-L/beta-2 involved in memory T-cell and neutrophil transmigration. Involved in platelet activation. In terms of biological role, (Microbial infection) Acts as a functional receptor for murine norovirus. Its function is as follows. (Microbial infection) In case of orthoreovirus infection, serves as receptor for the virus. The protein is Junctional adhesion molecule A (F11R) of Felis catus (Cat).